A 330-amino-acid polypeptide reads, in one-letter code: Low affinity immunoglobulin gamma Fc region receptor II (330 aa).

The signal sequence occupies residues 1–29 (MESNWTVHVFSRTLCHMLLWTAVLNLAAG). Residues 30–210 (THDLPKAVVK…QGPKSSRSLP (181 aa)) lie on the Extracellular side of the membrane. Ig-like C2-type domains lie at 50-106 (EDTV…QTRL) and 131-189 (GETI…LGRT). Intrachain disulfides connect C57-C99 and C138-C182. N-linked (GlcNAc...) asparagine glycans are attached at residues N65, N92, N166, and N173. A helical transmembrane segment spans residues 211–231 (VLTIVAAVTGIAVAAIVIILV). At 232–330 (SLVYLKKKQV…ETEHDYQNHI (99 aa)) the chain is on the cytoplasmic side. The segment at 261–330 (VGEYRQPSGG…ETEHDYQNHI (70 aa)) is disordered. Y290 carries the phosphotyrosine modification. An ITIM motif motif is present at residues 307 to 312 (ITYSLL). Y309 carries the phosphotyrosine; by SRC-type Tyr-kinases modification. Y326 carries the phosphotyrosine modification.

As to quaternary structure, interacts with FGR. Interacts with LYN. Glycosylated. In terms of processing, when coaggregated to BCR, isoform IIB1 and isoform IIB1' become tyrosine phosphorylated and bind to the SH2 domains of the protein tyrosine phosphatase PTPC1. Phosphorylated by SRC-type Tyr-kinases such as LYN, BLK, FYN and SYK. Widely expressed by cells of hemopoietic origin. The isoforms are differentially expressed. Isoform IIB1 is preferentially expressed by cells of the lymphoid lineage, isoform IIB2 by cells of the myeloid lineage, and isoform IIB3 is released by macrophages and is present in the serum. Isoform IIB1' is expressed in myeloid and lymphoid cell lines, in normal spleen cells, and in resting or LPS-activated B-cells but is not detected in mesenteric lymph node cells.

The protein localises to the cell membrane. It localises to the cytoplasm. The protein resides in the cytoskeleton. It is found in the secreted. Functionally, receptor for the Fc region of complexed immunoglobulins gamma. Low affinity receptor. Involved in a variety of effector and regulatory functions such as phagocytosis of antigen-antibody complexes from the circulation and modulation of antibody production by B-cells. Isoform IIB1 and isoform IIB1' form caps but fail to mediate endocytosis or phagocytosis. Isoform IIB2 can mediate the endocytosis of soluble immune complexes via clathrin-coated pits. Isoform IIB1 and isoform IIB2 can down-regulate B-cell, T-cell, and mast cell activation when coaggregated to B-cell receptors for AG (BCR), T-cell receptors for AG (TCR), and Fc receptors, respectively. The sequence is that of Low affinity immunoglobulin gamma Fc region receptor II (Fcgr2) from Mus musculus (Mouse).